A 644-amino-acid polypeptide reads, in one-letter code: Chaperone protein DnaK (644 aa).

Threonine 199 carries the phosphothreonine; by autocatalysis modification. Residues 550 to 584 (ADKLDESEKQRAQDEIKRGREAMESGDLERMKASR) show a composition bias toward basic and acidic residues. Disordered stretches follow at residues 550–586 (ADKL…SRDS) and 599–644 (YSQA…EDKK). Over residues 600–623 (SQAGPEQGAPGAEAGAGASQGASG) the composition is skewed to low complexity.

This sequence belongs to the heat shock protein 70 family.

In terms of biological role, acts as a chaperone. This Leptospira biflexa serovar Patoc (strain Patoc 1 / Ames) protein is Chaperone protein DnaK.